The primary structure comprises 209 residues: Uracil phosphoribosyltransferase (209 aa).

Residues Arg79, Arg104, and 131-139 each bind 5-phospho-alpha-D-ribose 1-diphosphate; that span reads DPMLATGGS. Uracil is bound by residues Ile194 and 199-201; that span reads GDA. Residue Asp200 coordinates 5-phospho-alpha-D-ribose 1-diphosphate.

This sequence belongs to the UPRTase family. Mg(2+) serves as cofactor.

It carries out the reaction UMP + diphosphate = 5-phospho-alpha-D-ribose 1-diphosphate + uracil. The protein operates within pyrimidine metabolism; UMP biosynthesis via salvage pathway; UMP from uracil: step 1/1. Its activity is regulated as follows. Allosterically activated by GTP. Catalyzes the conversion of uracil and 5-phospho-alpha-D-ribose 1-diphosphate (PRPP) to UMP and diphosphate. The polypeptide is Uracil phosphoribosyltransferase (Natranaerobius thermophilus (strain ATCC BAA-1301 / DSM 18059 / JW/NM-WN-LF)).